The following is a 473-amino-acid chain: B box and SPRY domain-containing protein (473 aa).

The interval 1 to 69 is disordered; it reads MSADVSGTES…PKQGSERSQL (69 aa). Over residues 35-51 the composition is skewed to pro residues; sequence KPGPGPEPRPESGPEPG. The B box-type zinc finger occupies 65-113; the sequence is ERSQLCPEHFEPLSWFCLSERRPVCATCAGFGGRCHRHRIRRAEEHAEE. The B30.2/SPRY domain occupies 259-455; it reads SPLLTQLWAA…ISIVRGPLAT (197 aa).

In terms of assembly, interacts with YWHAZ/14-3-3 protein zeta. Interacts with TRPV5 and TRPV6. According to PubMed:10978534, testis-specific. According to PubMed:16371431, broadly expressed.

It localises to the cytoplasm. Its subcellular location is the membrane. Its function is as follows. May regulate epithelial calcium transport by inhibiting TRPV5 activity. This chain is B box and SPRY domain-containing protein (Bspry), found in Mus musculus (Mouse).